Reading from the N-terminus, the 410-residue chain is Probable serine/threonine-protein kinase PBL8 (410 aa).

A compositionally biased stretch (basic and acidic residues) spans 1–10 (MGNCGTRDEA). The tract at residues 1–45 (MGNCGTRDEAAVFTPQAQAQQLQKKHSRSVSDLSDPSTPRFRDDS) is disordered. The N-myristoyl glycine moiety is linked to residue Gly-2. A lipid anchor (S-palmitoyl cysteine) is attached at Cys-4. A Phosphothreonine modification is found at Thr-58. A Protein kinase domain is found at 69 to 350 (FRPDYILGEG…DVVETLEPLQ (282 aa)). Residues 75–83 (LGEGGFGTV) and Lys-104 each bind ATP. Phosphotyrosine is present on Tyr-149. The active-site Proton acceptor is Asp-199. Phosphoserine occurs at positions 203 and 233. Thr-234 and Thr-239 each carry phosphothreonine. Tyr-247 carries the post-translational modification Phosphotyrosine.

Belongs to the protein kinase superfamily. Ser/Thr protein kinase family. In terms of assembly, interacts with the Xanthomonas campestris effector XopAC/AvrAC.

The protein resides in the cell membrane. The enzyme catalyses L-seryl-[protein] + ATP = O-phospho-L-seryl-[protein] + ADP + H(+). The catalysed reaction is L-threonyl-[protein] + ATP = O-phospho-L-threonyl-[protein] + ADP + H(+). Functionally, may be involved in plant defense signaling. The polypeptide is Probable serine/threonine-protein kinase PBL8 (Arabidopsis thaliana (Mouse-ear cress)).